The sequence spans 330 residues: 6-phosphogluconolactonase (330 aa).

This sequence belongs to the cycloisomerase 2 family.

It carries out the reaction 6-phospho-D-glucono-1,5-lactone + H2O = 6-phospho-D-gluconate + H(+). The protein operates within carbohydrate degradation; pentose phosphate pathway; D-ribulose 5-phosphate from D-glucose 6-phosphate (oxidative stage): step 2/3. Functionally, catalyzes the hydrolysis of 6-phosphogluconolactone to 6-phosphogluconate. This chain is 6-phosphogluconolactonase, found in Erwinia tasmaniensis (strain DSM 17950 / CFBP 7177 / CIP 109463 / NCPPB 4357 / Et1/99).